The following is a 389-amino-acid chain: SH3 and F-BAR domain-containing protein DDB_G0274695 (389 aa).

An F-BAR domain is found at 3–258; sequence EQFKDNFWGP…VITQIDKLED (256 aa). Residues 119-192 adopt a coiled-coil conformation; that stretch reads KLNKERKDME…QDYRDSVNKL (74 aa). Low complexity predominate over residues 300 to 328; the sequence is LTSSVSSNSLTSSYNSATTTPTPAPRSTP. The interval 300-329 is disordered; that stretch reads LTSSVSSNSLTSSYNSATTTPTPAPRSTPI. In terms of domain architecture, SH3 spans 332–389; it reads SKKKQAKALYDYVGSDATELDFFAGDIITILDEDESGWFRGELGDRIGLYPSNYCEPI.

The polypeptide is SH3 and F-BAR domain-containing protein DDB_G0274695 (Dictyostelium discoideum (Social amoeba)).